A 342-amino-acid polypeptide reads, in one-letter code: Isopentenyl-diphosphate delta-isomerase (342 aa).

Residue 11–12 (RK) coordinates substrate. FMN-binding positions include Ser-68, 69-71 (SMT), Ser-99, and Asn-127. 99–101 (SMR) is a binding site for substrate. Gln-162 provides a ligand contact to substrate. Glu-163 is a binding site for Mg(2+). FMN-binding positions include Lys-194, Thr-224, 274-276 (GFK), and 295-296 (AG).

It belongs to the IPP isomerase type 2 family. Homooctamer. Dimer of tetramers. The cofactor is FMN. Requires NADPH as cofactor. Mg(2+) serves as cofactor.

It localises to the cytoplasm. It carries out the reaction isopentenyl diphosphate = dimethylallyl diphosphate. Functionally, involved in the biosynthesis of isoprenoids. Catalyzes the 1,3-allylic rearrangement of the homoallylic substrate isopentenyl (IPP) to its allylic isomer, dimethylallyl diphosphate (DMAPP). This chain is Isopentenyl-diphosphate delta-isomerase, found in Rickettsia conorii (strain ATCC VR-613 / Malish 7).